Here is a 222-residue protein sequence, read N- to C-terminus: Glutathione S-transferase A4 (222 aa).

Residue Met1 is modified to N-acetylmethionine. Positions 3–83 (ARPKLHYPNG…YIADKHNLFG (81 aa)) constitute a GST N-terminal domain. Glutathione-binding positions include Tyr9, 54-55 (QV), and 67-68 (QT). The GST C-terminal domain occupies 85 to 208 (NLKERTLIDM…EPGSKKKPPP (124 aa)). Tyr212 provides a ligand contact to substrate.

The protein belongs to the GST superfamily. Alpha family. In terms of assembly, homodimer. In terms of tissue distribution, expressed at a high level in brain, placenta, and skeletal muscle and much lower in lung and liver.

The protein localises to the cytoplasm. The catalysed reaction is RX + glutathione = an S-substituted glutathione + a halide anion + H(+). Conjugation of reduced glutathione to a wide number of exogenous and endogenous hydrophobic electrophiles. This isozyme has a high catalytic efficiency with 4-hydroxyalkenals such as 4-hydroxynonenal (4-HNE). This Homo sapiens (Human) protein is Glutathione S-transferase A4 (GSTA4).